The sequence spans 580 residues: Negative elongation factor B (580 aa).

An N6-acetyllysine modification is found at lysine 519. The interval 552–580 is disordered; it reads DHRKPSPTQAAETPALDLPLPSVPAPATL. Serine 557 carries the post-translational modification Phosphoserine.

Belongs to the NELF-B family. In terms of assembly, the NELF complex is composed of NELFA, NELFB, NELFCD and NELFE; the N-terminus of NELFB binds to the NELFA:NELFCD subcomplex. Binds RNA which may help to stabilize the NELF complex on nucleic acid Interacts with the first BRCT repeat of BRCA1. Interacts with KIAA1191. Isoform 1 and isoform 2 interact with NELFA, NELFCD and NELFE. Isoform 1 is expressed in the kidney, liver, adipose and lung. Isoform 2 is widely expressed.

The protein localises to the nucleus. Functionally, essential component of the NELF complex, a complex that negatively regulates the elongation of transcription by RNA polymerase II (Pol II). The NELF complex, which acts via an association with the DSIF complex and causes transcriptional pausing, is counteracted by the P-TEFb kinase complex. May be able to induce chromatin unfolding. Essential for early embryogenesis; plays an important role in maintaining the undifferentiated state of embryonic stem cells (ESCs) by preventing unscheduled expression of developmental genes. Plays a key role in establishing the responsiveness of stem cells to developmental cues; facilitates plasticity and cell fate commitment in ESCs by establishing the appropriate expression level of signaling molecules. Supports the transcription of genes involved in energy metabolism in cardiomyocytes; facilitates the association of transcription initiation factors with the promoters of the metabolism-related genes. This is Negative elongation factor B (Nelfb) from Mus musculus (Mouse).